We begin with the raw amino-acid sequence, 270 residues long: Putative protein-disulfide oxidoreductase RT0103 (270 aa).

Positions 1 to 17 are cleaved as a signal peptide; that stretch reads MKNIFIVLIFLFLSSCA. The region spanning 71–264 is the Thioredoxin domain; the sequence is SVLTQDLHEQ…ISRAVDRALE (194 aa). Cys117 and Cys120 are disulfide-bonded.

The protein belongs to the thioredoxin family. DsbA subfamily.

It is found in the periplasm. Functionally, may be required for disulfide bond formation in some proteins. In Rickettsia typhi (strain ATCC VR-144 / Wilmington), this protein is Putative protein-disulfide oxidoreductase RT0103.